Consider the following 405-residue polypeptide: Bone morphogenetic protein 4 (405 aa).

The N-terminal stretch at 1-19 is a signal peptide; that stretch reads MIPGNRMLMVILLCQVLLG. A propeptide spanning residues 20-291 is cleaved from the precursor; sequence GTNHASLIPE…GHALTRRARR (272 aa). 4 N-linked (GlcNAc...) asparagine glycosylation sites follow: Asn144, Asn208, Asn347, and Asn362. Cystine bridges form between Cys305-Cys370, Cys334-Cys402, and Cys338-Cys404.

This sequence belongs to the TGF-beta family. As to quaternary structure, homodimer; disulfide-linked. Part of a complex consisting of TWSG1 and CHRD. Forms a ternary complex with chordin/CHRD and TSKU.

It is found in the secreted. Its function is as follows. Negatively regulates the structure and function of the limb apical ectodermal ridge. In Gallus gallus (Chicken), this protein is Bone morphogenetic protein 4 (BMP4).